The following is a 161-amino-acid chain: DNA-binding protein inhibitor ID-4 (161 aa).

One can recognise a bHLH domain in the interval 52–104; that stretch reads AAEAAADEPALCLQCDMNDCYSRLRRLVPTIPPNKKVSKVEILQHVIDYILDL. The span at 117–126 shows a compositional bias: pro residues; that stretch reads QPPPPAPPHH. The interval 117–161 is disordered; the sequence is QPPPPAPPHHPAGTCPAAPPRTPLTALNTDPAGAVNKQGDSILCR.

Heterodimer with other HLH proteins.

Its subcellular location is the nucleus. Its function is as follows. Transcriptional regulator (lacking a basic DNA binding domain) which negatively regulates the basic helix-loop-helix (bHLH) transcription factors by forming heterodimers and inhibiting their DNA binding and transcriptional activity. Implicated in regulating a variety of cellular processes, including cellular growth, senescence, differentiation, apoptosis, angiogenesis, and neoplastic transformation. The chain is DNA-binding protein inhibitor ID-4 (ID4) from Homo sapiens (Human).